Reading from the N-terminus, the 338-residue chain is 4-hydroxy-2-oxovalerate aldolase (338 aa).

Positions 6–256 (IHIVDTTLRD…RTGVDFYKVM (251 aa)) constitute a Pyruvate carboxyltransferase domain. 14 to 15 (RD) is a substrate binding site. Mn(2+) is bound at residue aspartate 15. Histidine 18 functions as the Proton acceptor in the catalytic mechanism. Substrate-binding residues include serine 168 and histidine 195. Histidine 195 and histidine 197 together coordinate Mn(2+). Tyrosine 286 contacts substrate.

Belongs to the 4-hydroxy-2-oxovalerate aldolase family.

It catalyses the reaction (S)-4-hydroxy-2-oxopentanoate = acetaldehyde + pyruvate. The polypeptide is 4-hydroxy-2-oxovalerate aldolase (Moorella thermoacetica (strain ATCC 39073 / JCM 9320)).